The following is a 932-amino-acid chain: Ribosome biogenesis protein ERB1 (932 aa).

The segment covering 1–18 (MVRPSSSSSASASAARSG) has biased composition (low complexity). Residues 1-229 (MVRPSSSSSA…RSQAAQAFDL (229 aa)) form a disordered region. The segment covering 27–36 (PTATNPTTRA) has biased composition (polar residues). 2 stretches are compositionally biased toward acidic residues: residues 57-119 (VSDD…EVDS) and 150-172 (DNSDFDDDADEGDLAYDSADEDE). Residues 175–184 (SAFAARSDAS) show a composition bias toward low complexity. WD repeat units follow at residues 555-594 (PDGGRVRCLSVDPTGNWLVTGGDDGRARLWDVAIGRCTAS) and 604-644 (AERS…NYAK). Residues 679–698 (SMPSKPDARSPVAWTRPSEA) form a disordered region. WD repeat units lie at residues 762 to 800 (SKGSSIQKLVFHPTKPWIFVATQRYIRIYDLMAQSLIKT), 803 to 842 (SGFKWISTLDVHPSGDHLMVGSYDKKLAWFDLDLSARPYK), 846 to 885 (YHARAIRSVHFSTSWNLVADASDDGTLQLFYAKVGADYGE), and 901 to 932 (KNGLGVLDVKWHPNQPWLFSAGADGNALLWTT).

This sequence belongs to the WD repeat BOP1/ERB1 family. Component of the NOP7 complex, composed of ERB1, NOP7 and YTM1. The complex is held together by ERB1, which interacts with NOP7 via its N-terminal domain and with YTM1 via a high-affinity interaction between the seven-bladed beta-propeller domains of the 2 proteins. The NOP7 complex associates with the 66S pre-ribosome.

The protein resides in the nucleus. It is found in the nucleolus. The protein localises to the nucleoplasm. Its function is as follows. Component of the NOP7 complex, which is required for maturation of the 25S and 5.8S ribosomal RNAs and formation of the 60S ribosome. This Mycosarcoma maydis (Corn smut fungus) protein is Ribosome biogenesis protein ERB1.